The chain runs to 544 residues: Major royal jelly protein 3 (544 aa).

The N-terminal stretch at 1-20 (MTKWLLLVVCLGIACQDVTS) is a signal peptide. N-linked (GlcNAc...) asparagine glycosylation occurs at Asn-183. The tract at residues 421 to 544 (RYHNQNAGNQ…NQVHHSSKLH (124 aa)) is disordered. Repeat copies occupy residues 424 to 428 (NQNAG), 429 to 433 (NQNAD), 434 to 438 (NQNAD), 439 to 443 (NQNAN), 444 to 448 (NQNAD), 449 to 453 (NQNAN), 454 to 458 (KQNGN), 459 to 463 (RQNDN), 464 to 468 (RQNDN), 469 to 473 (KQNGN), 474 to 478 (RQNDN), 479 to 483 (KQNGN), 484 to 488 (RQNDN), 489 to 493 (KQNGN), 494 to 498 (RQNGN), 499 to 503 (KQNDN), 504 to 508 (KQNGN), 509 to 513 (RQNDN), 514 to 518 (KRNGN), and 519 to 523 (RQNDN). 3 stretches are compositionally biased toward low complexity: residues 424 to 460 (NQNA…GNRQ), 468 to 510 (NKQN…GNRQ), and 518 to 530 (NRQN…QNDN). The segment at 424-523 (NQNAGNQNAD…KRNGNRQNDN (100 aa)) is 23 X 5 AA tandem repeats of [NKR]-[RQ]-N-[AGD]-[DNG]. Residues 524–525 (QN) form a 21; half-length repeat. A run of 2 repeats spans residues 526–530 (NQNDN) and 531–535 (NRNDN).

The protein belongs to the major royal jelly protein family. Homoligomer; in the absence of RNA, assembles into a higher-order oligomeric form, composed of around 20 monomer units. In terms of tissue distribution, found in and secreted from the hypopharyngeal glands of the worker honey bee (at protein level); expression peaks at 12 days post eclosion. Expressed in the brains of worker bees. Expressed in the brains of adult worker bees peaking at 12 days post eclosion (at protein level). Expressed in the spermatheca of adult queen bees (at protein level); Expression levels are higher in mated queens than in virgin queens. Expressed in queen bee ovaries and male drone testes. Expression in the head of forager worker bees is lower than in the heads of nurse worker bees.

Its subcellular location is the secreted. Functionally, abundant protein component of royal jelly, a substance produced in the hypopharyngeal gland containing proteins, free amino acids, fatty acids, sugars and other nutrients, which is fed to developing larvae by worker nurse bees. Major royal jelly proteins (MRJPs) are high in essential amino acids and probably have a nutritional function in larval food. All larvae are fed some royal jelly (also known as worker jelly) early in their development but it forms the principal source of nutrition for larvae destined to become queen bees. Secreted RNA-binding protein required to concentrate, stabilize and enhance environmental RNA bioavailability in the honey bee royal jelly. Acts as a RNA-aggregating protein: binds 18 nucleotides and longer single- and double-stranded RNA (ssRNA and dsRNA, respectively) in a non-specific manner. RNA-binding drives super-order assembly of oligomers into extracellular ribonucleoprotein granules that concentrate, protect and enhance RNA uptake granules, facilitating RNA transfer among bees. Produced in the spermatheca of adult queen bees, along with other major royal jelly proteins, where it may act as a nutrient supply for sperm stored by mated queens, or be involved in energy metabolism. This Apis mellifera (Honeybee) protein is Major royal jelly protein 3.